Consider the following 510-residue polypeptide: Adenosine deaminase 2 (510 aa).

The N-terminal stretch at 1–24 (MSGWPVLPALLLAVAMSSFHSATS) is a signal peptide. Positions 25–95 (RDEERNRLLM…GLMEKSAVFN (71 aa)) are dimerization. The Zn(2+) site is built by histidine 107 and histidine 109. Aspartate 110 contributes to the substrate binding site. A glycan (N-linked (GlcNAc...) asparagine) is linked at asparagine 122. The PRB domain stretch occupies residues 122 to 182 (NATYRPYCYF…TEFDNSLLRT (61 aa)). The cysteines at positions 132 and 156 are disulfide-linked. The N-linked (GlcNAc...) asparagine glycan is linked to asparagine 171. Residues 201–208 (WKKFKTIF), histidine 290, and glycine 323 contribute to the substrate site. A Zn(2+)-binding site is contributed by histidine 353. The Proton donor role is filled by glutamate 356. A glycan (N-linked (GlcNAc...) asparagine) is linked at asparagine 375. Histidine 381 functions as the Proton acceptor in the catalytic mechanism. Aspartate 438 serves as a coordination point for Zn(2+). Aspartate 439 is a binding site for substrate.

The protein belongs to the metallo-dependent hydrolases superfamily. Adenosine and AMP deaminases family. ADGF subfamily. As to quaternary structure, homodimer. Interacts with adenosine receptors. Binds heparin. It depends on Zn(2+) as a cofactor.

The protein resides in the secreted. It carries out the reaction adenosine + H2O + H(+) = inosine + NH4(+). Functionally, adenosine deaminase that may contribute to the degradation of extracellular adenosine, a signaling molecule that controls a variety of cellular responses. Requires elevated adenosine levels for optimal enzyme activity. Binds to cell surfaces via proteoglycans and may play a role in the regulation of cell proliferation and differentiation, independently of its enzyme activity. The sequence is that of Adenosine deaminase 2 from Sus scrofa (Pig).